Consider the following 504-residue polypeptide: Pup--protein ligase (504 aa).

Glutamate 30 contributes to the Mg(2+) binding site. Position 74 (arginine 74) interacts with ATP. Tyrosine 76 provides a ligand contact to Mg(2+). The active-site Proton acceptor is aspartate 78. Mg(2+) is bound at residue glutamate 84. The ATP site is built by threonine 87 and tryptophan 459.

This sequence belongs to the Pup ligase/Pup deamidase family. Pup-conjugating enzyme subfamily.

It carries out the reaction ATP + [prokaryotic ubiquitin-like protein]-L-glutamate + [protein]-L-lysine = ADP + phosphate + N(6)-([prokaryotic ubiquitin-like protein]-gamma-L-glutamyl)-[protein]-L-lysine.. It functions in the pathway protein degradation; proteasomal Pup-dependent pathway. It participates in protein modification; protein pupylation. Its function is as follows. Catalyzes the covalent attachment of the prokaryotic ubiquitin-like protein modifier Pup to the proteasomal substrate proteins, thereby targeting them for proteasomal degradation. This tagging system is termed pupylation. The ligation reaction involves the side-chain carboxylate of the C-terminal glutamate of Pup and the side-chain amino group of a substrate lysine. The sequence is that of Pup--protein ligase from Corynebacterium urealyticum (strain ATCC 43042 / DSM 7109).